We begin with the raw amino-acid sequence, 141 residues long: Lutropin subunit beta (141 aa).

Residues 1-22 form the signal peptide; that stretch reads MERYQELTVLLLLLLLEGGSWG. Disulfide bonds link C30–C78, C44–C93, C47–C131, C55–C109, C59–C111, and C114–C121. An N-linked (GlcNAc...) asparagine glycan is attached at N34.

Belongs to the glycoprotein hormones subunit beta family. As to quaternary structure, heterodimer of a common alpha chain and a unique beta chain which confers biological specificity to thyrotropin, lutropin, follitropin and gonadotropin.

The protein localises to the secreted. Promotes spermatogenesis and ovulation by stimulating the testes and ovaries to synthesize steroids. This is Lutropin subunit beta (LHB) from Trichosurus vulpecula (Brush-tailed possum).